The chain runs to 1254 residues: NPC intracellular cholesterol transporter 1 homolog 1b (1254 aa).

The N-terminal stretch at 1-16 is a signal peptide; sequence MKVIFATIWLIAGAWS. Over 17-272 the chain is Extracellular; that stretch reads QSAEQLGCIW…WKIAGLYGVT (256 aa). Intrachain disulfides connect C24-C81, C62-C116, C82-C120, C104-C241, C107-C161, C178-C186, C231-C246, and C243-C250. N123 and N132 each carry an N-linked (GlcNAc...) asparagine glycan. The chain crosses the membrane as a helical span at residues 273–293; sequence FILALIIACALSFFIFWGAFG. Residues 294–325 are Cytoplasmic-facing; that stretch reads KTSAPSVCMPTLFGEFFYHGFRIWGTFCAKHP. Residues 326–346 traverse the membrane as a helical segment; that stretch reads VIVLALCSWAIAGLSFGIRYM. Residues 347–593 are Extracellular-facing; the sequence is TITTDPVELW…AIVELSEGEV (247 aa). N-linked (GlcNAc...) asparagine glycosylation is present at N389. C438 and C454 are oxidised to a cystine. N479 carries an N-linked (GlcNAc...) asparagine glycan. A disulfide bond links C491 and C500. An SSD domain is found at 592-757; that stretch reads EVSTVVISYV…ITAFVALMAI (166 aa). The chain crosses the membrane as a helical span at residues 594–614; that stretch reads STVVISYVVMFVYVAIALGHI. At 615–625 the chain is on the cytoplasmic side; sequence RSCRGFLRESR. The helical transmembrane segment at 626 to 646 threads the bilayer; that stretch reads IMLAIGGIVIVLASVVCSLGF. Residues 647-657 lie on the Extracellular side of the membrane; that stretch reads WGYLDVTTTML. The chain crosses the membrane as a helical span at residues 658-678; the sequence is AIEVIPFLVLAVGVDNIFIMV. Over 679 to 736 the chain is Cytoplasmic; that stretch reads HTYQRLDHSKFKTTHEAIGEAIGQVGPSILQTAGSEMACFAIGCISDMPAVKTFAMYA. Residues 737 to 757 form a helical membrane-spanning segment; sequence AIAILLDFLLQITAFVALMAI. At 758–815 the chain is on the extracellular side; the sequence is DEKRYLDGRLDMLCCVKSGGKKINDEDGDGVDRPKEVGLLETLFKNFYSPFLLSKPVK. The chain crosses the membrane as a helical span at residues 816 to 836; the sequence is VSVLLIFTVITCLSLMVTPSI. The Cytoplasmic portion of the chain corresponds to 837 to 857; the sequence is EKGLDQEMSMPKNSHVVKYFR. Residues 858–878 form a helical membrane-spanning segment; sequence YMVDLLAMGAPVYWVLKPGLN. At 879–1079 the chain is on the extracellular side; it reads YSEPLQQNLI…EQYLTIWGDA (201 aa). C889 and C894 are disulfide-bonded. N-linked (GlcNAc...) asparagine glycans are attached at residues N896 and N939. Disulfide bonds link C935/C990, C936/C958, and C946/C955. A helical transmembrane segment spans residues 1080 to 1100; that stretch reads MFSLGMSLVAIFLVTLLITGL. Over 1101–1105 the chain is Cytoplasmic; the sequence is DITST. A helical membrane pass occupies residues 1106-1126; sequence FIVLFMVICILINMLGMMWAW. Residues 1127–1132 lie on the Extracellular side of the membrane; sequence SINLNA. Residues 1133-1153 traverse the membrane as a helical segment; it reads ISLVNLVVCVGIGVEFVAHIV. The Cytoplasmic segment spans residues 1154–1174; sequence RSFKRAEGTAQERARHSLNVT. Residues 1175–1195 traverse the membrane as a helical segment; it reads GSSVLSGITLTKFAGIVVLGF. Over 1196–1207 the chain is Extracellular; sequence SNSQIFQVFYFR. A helical transmembrane segment spans residues 1208 to 1228; it reads MYLGIVLIGAAHGLILLPVLL. Residues 1229-1254 are Cytoplasmic-facing; that stretch reads SLLGPPQKLARSSGAEPTASITITTN.

The protein belongs to the patched family. In terms of tissue distribution, expressed in the midgut.

It localises to the cell membrane. It carries out the reaction cholesterol(in) = cholesterol(out). Important for cholesterol absorption at the midgut epithelium. Acts only in the early steps of sterol absorption, prior to Npc1a-dependent intracellular sterol trafficking. In Drosophila melanogaster (Fruit fly), this protein is NPC intracellular cholesterol transporter 1 homolog 1b.